An 83-amino-acid polypeptide reads, in one-letter code: UPF0297 protein CLK_1948 (83 aa).

This sequence belongs to the UPF0297 family.

The polypeptide is UPF0297 protein CLK_1948 (Clostridium botulinum (strain Loch Maree / Type A3)).